The chain runs to 59 residues: MAKKENRIIITLECTEARKEGLTPSRYTTTKNKKNNTERLVLKKYNPNLKKHTEHKEIK.

The tract at residues 26–59 is disordered; it reads RYTTTKNKKNNTERLVLKKYNPNLKKHTEHKEIK.

The protein belongs to the bacterial ribosomal protein bL33 family.

The polypeptide is Large ribosomal subunit protein bL33 (Chlorobium phaeobacteroides (strain BS1)).